Here is a 133-residue protein sequence, read N- to C-terminus: UPF0292 protein TGAM_1777 (133 aa).

A Toprim domain is found at 20–100 (EGALIVEGLR…RVDVETRREL (81 aa)). Mg(2+)-binding residues include E26, D69, and D71.

The protein belongs to the UPF0292 family. Requires Mg(2+) as cofactor.

The chain is UPF0292 protein TGAM_1777 from Thermococcus gammatolerans (strain DSM 15229 / JCM 11827 / EJ3).